A 319-amino-acid polypeptide reads, in one-letter code: Olfactory receptor 8K1 (319 aa).

Topologically, residues 1–31 (MNHVVKHNHTAVTKVTEFILMGITDNPGLQA) are extracellular. Asn8 carries an N-linked (GlcNAc...) asparagine glycan. A helical membrane pass occupies residues 32 to 52 (PLFGLFLIIYLVTVIGNLGMV). At 53 to 60 (ILTYLDSK) the chain is on the cytoplasmic side. Residues 61–81 (LHTPMYFFLRHLSITDLGYST) traverse the membrane as a helical segment. At 82-105 (VIAPKMLVNFIVHKNTISYNWYAT) the chain is on the extracellular side. The helical transmembrane segment at 106-126 (QLAFFEIFIISELFILSAMAY) threads the bilayer. The Cytoplasmic segment spans residues 127 to 145 (DRYVAICKPLLYVIIMAEK). Residues 146–166 (VLWVLVIVPYLYSTFVSLFLT) traverse the membrane as a helical segment. Residues 167 to 203 (IKLFKLSFCGSNIISYFYCDCIPLMSILCSDTNELEL) are Extracellular-facing. The helical transmembrane segment at 204–223 (IILIFSGCNLLFSLSIVLIS) threads the bilayer. Topologically, residues 224 to 243 (YMFILVAILRMNSRKGRYKA) are cytoplasmic. A helical transmembrane segment spans residues 244–264 (FSTCSSHLTVVIMFYGTLLFI). Residues 265 to 277 (YLQPKSSHTLAID) lie on the Extracellular side of the membrane. A helical membrane pass occupies residues 278 to 298 (KMASVFYTLLIPMLNPLIYSL). The Cytoplasmic segment spans residues 299-319 (RNKEVKDALKRTLTNRFKIPI).

This sequence belongs to the G-protein coupled receptor 1 family.

It localises to the cell membrane. Odorant receptor. This Homo sapiens (Human) protein is Olfactory receptor 8K1 (OR8K1).